Here is a 339-residue protein sequence, read N- to C-terminus: MKVESVVKEETKKPERKIKLAIAKPEDYSNKNVILEKEEELICPVCGSKSIIKDYERAEIVCEMCGCVLQQNLFDVGPEWRAFDHEQRVKRSRVGAPMTYTIHDKGLSTVIDWRNKDSYGKDISADKRAQLYRLRKWQRRIRVSDASERNLAFALSELDRIASKLGLPRNVRENAAVLYRGAVEKGLIRGRSIEGVAAAALYAACRRCKVPRTLDEIAEVSRVDRKEIGRTYRFISRELNIRLAPTNPVDYVPRFASELKLPGEVESKAISILQKAGEKGLTSSRGPTGVAAAAIYIASVLQGTRRTQREVADVAGVTEVTIRNRYKELTEHLDIDVTL.

A TFIIB-type zinc finger spans residues 39–70 (EELICPVCGSKSIIKDYERAEIVCEMCGCVLQ). Zn(2+) contacts are provided by Cys43, Cys46, Cys62, and Cys65. 2 tandem repeats follow at residues 156-239 (SELD…SREL) and 250-331 (DYVP…ELTE).

Belongs to the TFIIB family.

Its function is as follows. Stabilizes TBP binding to an archaeal box-A promoter. Also responsible for recruiting RNA polymerase II to the pre-initiation complex (DNA-TBP-TFIIB). The polypeptide is Transcription initiation factor IIB (Methanococcus maripaludis (strain C5 / ATCC BAA-1333)).